Reading from the N-terminus, the 187-residue chain is Troponin I, slow skeletal muscle (187 aa).

At Pro-2 the chain carries N-acetylproline. The segment at 2–48 (PEVERKSKITASRKLMLKSLMLAKAKECWEQEHEEREAEKVRYLSER) is involved in binding TNC. The residue at position 58 (Ser-58) is a Phosphoserine. An involved in binding TNC and actin region spans residues 97–118 (LKLKVLDLRGKFKRPPLRRVRV).

Belongs to the troponin I family. In terms of assembly, binds to actin and tropomyosin.

In terms of biological role, troponin I is the inhibitory subunit of troponin, the thin filament regulatory complex which confers calcium-sensitivity to striated muscle actomyosin ATPase activity. The protein is Troponin I, slow skeletal muscle (Tnni1) of Rattus norvegicus (Rat).